We begin with the raw amino-acid sequence, 337 residues long: Tetraacyldisaccharide 4'-kinase (337 aa).

58 to 65 (TVGGSGKT) is a binding site for ATP.

This sequence belongs to the LpxK family.

The enzyme catalyses a lipid A disaccharide + ATP = a lipid IVA + ADP + H(+). Its pathway is glycolipid biosynthesis; lipid IV(A) biosynthesis; lipid IV(A) from (3R)-3-hydroxytetradecanoyl-[acyl-carrier-protein] and UDP-N-acetyl-alpha-D-glucosamine: step 6/6. In terms of biological role, transfers the gamma-phosphate of ATP to the 4'-position of a tetraacyldisaccharide 1-phosphate intermediate (termed DS-1-P) to form tetraacyldisaccharide 1,4'-bis-phosphate (lipid IVA). This is Tetraacyldisaccharide 4'-kinase from Shewanella putrefaciens (strain CN-32 / ATCC BAA-453).